Reading from the N-terminus, the 202-residue chain is FMN-dependent NADH:quinone oxidoreductase 2 (202 aa).

FMN contacts are provided by residues serine 9, 15-17 (SVS), 93-96 (MYNF), and 137-140 (SRGG).

This sequence belongs to the azoreductase type 1 family. As to quaternary structure, homodimer. FMN serves as cofactor.

The enzyme catalyses 2 a quinone + NADH + H(+) = 2 a 1,4-benzosemiquinone + NAD(+). It carries out the reaction N,N-dimethyl-1,4-phenylenediamine + anthranilate + 2 NAD(+) = 2-(4-dimethylaminophenyl)diazenylbenzoate + 2 NADH + 2 H(+). Functionally, quinone reductase that provides resistance to thiol-specific stress caused by electrophilic quinones. In terms of biological role, also exhibits azoreductase activity. Catalyzes the reductive cleavage of the azo bond in aromatic azo compounds to the corresponding amines. The chain is FMN-dependent NADH:quinone oxidoreductase 2 from Bradyrhizobium diazoefficiens (strain JCM 10833 / BCRC 13528 / IAM 13628 / NBRC 14792 / USDA 110).